We begin with the raw amino-acid sequence, 379 residues long: Guanine nucleotide-binding protein subunit alpha-12 (379 aa).

Cysteine 11 carries S-palmitoyl cysteine lipidation. In terms of domain architecture, G-alpha spans arginine 54 to glutamine 379. Positions lysine 57 to threonine 70 are G1 motif. Residues glutamate 65–threonine 70 and leucine 200–arginine 203 contribute to the GTP site. Serine 69 contacts Mg(2+). The G2 motif stretch occupies residues aspartate 198 to threonine 206. Position 206 (threonine 206) interacts with Mg(2+). Threonine 206 bears the Phosphothreonine mark. A G3 motif region spans residues phenylalanine 221 to arginine 230. The interval isoleucine 290–aspartate 297 is G4 motif. Residues asparagine 294 to aspartate 297 and alanine 351 contribute to the GTP site. A G5 motif region spans residues threonine 349–threonine 354.

Belongs to the G-alpha family. G(12) subfamily. G proteins are composed of 3 units; alpha, beta and gamma. The alpha chain contains the guanine nucleotide binding site. Interacts with UBXD5. Interacts (in GTP-bound form) with PPP5C (via TPR repeats); activates PPP5C phosphatase activity and translocates PPP5C to the cell membrane. Interacts with RGS22. Interacts (via N-terminus) with NAPA; the interaction promotes CDH5 localization to plasma membrane. Interacts with CTNND1 (via N-terminus); the interaction regulates CDH1-mediated cell-cell adhesion. Interacts with PPP2R1A; the interaction promotes protein phosphatase 2A activation causing dephosphorylation of MAPT. Interacts (in GTP-bound form) with ARHGEF1. Interacts (in GTP-bound form) with ARHGEF11 (via RGS domain). Interacts (in GTP-bound form) with ARHGEF12 (via RGS domain).

It localises to the cell membrane. The protein resides in the lateral cell membrane. The protein localises to the cytoplasm. Guanine nucleotide-binding proteins (G proteins) are involved as modulators or transducers in various transmembrane signaling systems. Activates effector molecule RhoA by binding and activating RhoGEFs (ARHGEF12/LARG). GNA12-dependent Rho signaling subsequently regulates transcription factor AP-1 (activating protein-1). GNA12-dependent Rho signaling also regulates protein phosphatese 2A activation causing dephosphorylation of its target proteins. Promotes tumor cell invasion and metastasis by activating RhoA/ROCK signaling pathway and up-regulating pro-inflammatory cytokine production. Inhibits CDH1-mediated cell adhesion in process independent from Rho activation. Together with NAPA promotes CDH5 localization to plasma membrane. May play a role in the control of cell migration through the TOR signaling cascade. In Rattus norvegicus (Rat), this protein is Guanine nucleotide-binding protein subunit alpha-12 (Gna12).